A 201-amino-acid polypeptide reads, in one-letter code: Natural cytotoxicity triggering receptor 3 (201 aa).

Residues 1-18 (MAWMLLLILIMVHPGSCA) form the signal peptide. The Ig-like domain occupies 19 to 126 (LWVSQPPEIR…VGTGNGTRLV (108 aa)). Residues 19–135 (LWVSQPPEIR…VVEKEHPQLG (117 aa)) are Extracellular-facing. A disulfide bond links C39 and C108. Residues N42 and N121 are each glycosylated (N-linked (GlcNAc...) asparagine). The chain crosses the membrane as a helical span at residues 136–156 (AGTVLLLRAGFYAVSFLSVAV). Residues 157–201 (GSTVYYQGKCLTWKGPRRQLPAVVPAPLPPPCGSSAQLLPPVPGG) are Cytoplasmic-facing.

This sequence belongs to the natural cytotoxicity receptor (NCR) family. In terms of assembly, homodimer in the unliganted form. Interacts with CD3Z. Interacts with and is activated by binding to NCR3LG1. Interacts with and is activated by binding to BAG6. Interacts with and is inhibited by binding to LGALS3.

It is found in the cell membrane. Its function is as follows. Cell membrane receptor of natural killer/NK cells that is activated by binding of extracellular ligands including BAG6 and NCR3LG1. Stimulates NK cells cytotoxicity toward neighboring cells producing these ligands. It controls, for instance, NK cells cytotoxicity against tumor cells. Engagement of NCR3 by BAG6 also promotes myeloid dendritic cells (DC) maturation, both through killing DCs that did not acquire a mature phenotype, and inducing the release by NK cells of TNFA and IFNG that promote DC maturation. The protein is Natural cytotoxicity triggering receptor 3 (NCR3) of Pan troglodytes (Chimpanzee).